Here is a 124-residue protein sequence, read N- to C-terminus: Large ribosomal subunit protein bL12 (124 aa).

The protein belongs to the bacterial ribosomal protein bL12 family. As to quaternary structure, homodimer. Part of the ribosomal stalk of the 50S ribosomal subunit. Forms a multimeric L10(L12)X complex, where L10 forms an elongated spine to which 2 to 4 L12 dimers bind in a sequential fashion. Binds GTP-bound translation factors.

Its function is as follows. Forms part of the ribosomal stalk which helps the ribosome interact with GTP-bound translation factors. Is thus essential for accurate translation. This chain is Large ribosomal subunit protein bL12, found in Burkholderia cenocepacia (strain HI2424).